The primary structure comprises 129 residues: Ropporin-1 (129 aa).

In terms of domain architecture, RIIa spans 11 to 34; that stretch reads PELPELLKTQPPDLIQWAAEYFGA.

It belongs to the ropporin family. As to quaternary structure, homodimer. Interacts with AKAP3. May interact with SPA17. Interacts with RHPN1. Interacts with FSCB; the interaction increases upon spermatozoa capacitation conditions. Interacts with CFAP61. In terms of processing, sumoylated, sumoylation decreases upon spermatozoa capacitation conditions.

Its subcellular location is the cell projection. It is found in the cilium. The protein localises to the flagellum. In terms of biological role, important for male fertility. With ROPN1L, involved in fibrous sheath integrity and sperm motility, plays a role in PKA-dependent signaling processes required for spermatozoa capacitation. The chain is Ropporin-1 from Mesocricetus auratus (Golden hamster).